An 860-amino-acid polypeptide reads, in one-letter code: DDB1- and CUL4-associated factor 6 (860 aa).

WD repeat units follow at residues 49-88, 92-133, 139-179, 189-229, and 251-290; these read VHDG…VLTT, GHRA…ETNR, CHYG…SCTK, NCRR…TRAT, and NKSC…AREL. 2 stretches are compositionally biased toward basic and acidic residues: residues 288 to 303 and 312 to 334; these read RELK…EELR and LRGD…RDGE. Disordered stretches follow at residues 288–340, 355–392, 407–490, and 502–675; these read RELK…PNVS, EASE…SPDL, QFLQ…TTST, and IASS…GPGD. Position 336 is a phosphoserine (serine 336). 2 stretches are compositionally biased toward polar residues: residues 379–388 and 409–421; these read DISTLPTVPS and LQPS…SAQA. Residues 422 to 441 show a composition bias toward low complexity; the sequence is HSTSSPTESPHSTPLLSSPD. The segment covering 457 to 467 has biased composition (basic and acidic residues); that stretch reads HQSDNNNEKLS. The segment covering 480-490 has biased composition (polar residues); the sequence is HYSTEGTTTST. Low complexity predominate over residues 502–511; it reads IASSSRGIGS. Residues 535 to 549 are compositionally biased toward basic and acidic residues; the sequence is SETKAPEESSEDVTK. Residues 614 to 626 show a composition bias toward low complexity; it reads TSTESATNENNTN. The segment covering 627–636 has biased composition (polar residues); the sequence is PEPQFQTEAT. Serine 649 bears the Phosphoserine mark. Threonine 654 carries the phosphothreonine modification. Phosphoserine is present on serine 657. In terms of domain architecture, IQ spans 676–705; the sequence is RRSAVARIQEFFRRRKERKEMEELDTLNIR. WD repeat units follow at residues 718 to 756 and 759 to 798; these read NSRT…HLML and ADNH…RIFN. Serine 847 and serine 850 each carry phosphoserine.

Interacts with the nuclear receptors NR3C1 and AR in the presence of ligand. Interacts with DDB1, CUL4A and CUL4B. Highly expressed in skeletal muscle and testis. Expressed to a lesser degree in heart, prostate, and adrenal gland.

The protein resides in the nucleus. Its pathway is protein modification; protein ubiquitination. In terms of biological role, ligand-dependent coactivator of nuclear receptors. Enhance transcriptional activity of the nuclear receptors NR3C1 and AR. May function as a substrate receptor for CUL4-DDB1 E3 ubiquitin-protein ligase complex. The polypeptide is DDB1- and CUL4-associated factor 6 (DCAF6) (Homo sapiens (Human)).